We begin with the raw amino-acid sequence, 193 residues long: Probable 3' cyclic ADP-D-ribose synthase ThsB' (193 aa).

In terms of assembly, homodimer.

It catalyses the reaction NAD(+) = 3'cADPR + nicotinamide + H(+). Its function is as follows. TIR-like domain-containing component of the Thoeris antiviral defense system, composed of ThsA and ThsB and ThsB'. In the presence of NAD(+) produces a signaling molecule that activates cognate ThsA (AC J8G6Z1) to hydrolyze NAD(+). The signaling molecule is a cyclic ADP-D-ribose isomer and may be 3' cyclic ADP-D-ribose (3'cADPR); it is not 2'cADPR. This chain is Probable 3' cyclic ADP-D-ribose synthase ThsB', found in Bacillus cereus (strain MSX-D12).